We begin with the raw amino-acid sequence, 183 residues long: MFLMVEKKPVPEDWPHIVGDYVVGDEESPVAVVTLGSHMEDEPVKAGAAISGPLHTENLGIEKVVGNVIANPNLRFLVVCGAEVMGHITGQTMKALHSNGVDLETGRIIGATGAIPYIENMPEEAIERFRRQVELVDMVDVEDPDSIAARIQECVVHDSGAMEEEPLILKVPEIGKGDSEENT.

The Cytoplasmic segment spans residues 1-101 (MFLMVEKKPV…TMKALHSNGV (101 aa)). A 5-hydroxybenzimidazolylcob(I)amide-binding site is contributed by His87. A helical transmembrane segment spans residues 102–118 (DLETGRIIGATGAIPYI). At 119–183 (ENMPEEAIER…IGKGDSEENT (65 aa)) the chain is on the extracellular side.

This sequence belongs to the MtrA family. In terms of assembly, the complex is composed of 8 subunits; MtrA, MtrB, MtrC, MtrD, MtrE, MtrF, MtrG and MtrH. The cofactor is 5-hydroxybenzimidazolylcob(I)amide.

Its subcellular location is the cell membrane. It carries out the reaction 5-methyl-5,6,7,8-tetrahydromethanopterin + coenzyme M + 2 Na(+)(in) = 5,6,7,8-tetrahydromethanopterin + methyl-coenzyme M + 2 Na(+)(out). The protein operates within one-carbon metabolism; methanogenesis from CO(2); methyl-coenzyme M from 5,10-methylene-5,6,7,8-tetrahydromethanopterin: step 2/2. In terms of biological role, part of a complex that catalyzes the formation of methyl-coenzyme M and tetrahydromethanopterin from coenzyme M and methyl-tetrahydromethanopterin. This is an energy-conserving, sodium-ion translocating step. The protein is Tetrahydromethanopterin S-methyltransferase subunit A 2 of Methanothermobacter thermautotrophicus (strain ATCC 29096 / DSM 1053 / JCM 10044 / NBRC 100330 / Delta H) (Methanobacterium thermoautotrophicum).